A 78-amino-acid chain; its full sequence is uncharacterized protein (78 aa).

A disordered region spans residues 1–28; sequence MQANHSVSYLYESSTSKRSNGLFSQTQK.

This is an uncharacterized protein from Saccharomyces cerevisiae (strain ATCC 204508 / S288c) (Baker's yeast).